The following is a 153-amino-acid chain: Small ribosomal subunit protein uS17 (153 aa).

It belongs to the universal ribosomal protein uS17 family.

The protein is Small ribosomal subunit protein uS17 (RpS11) of Anopheles gambiae (African malaria mosquito).